The following is a 205-amino-acid chain: Large ribosomal subunit protein uL4 (205 aa).

Positions Arg44 to Ser79 are disordered.

This sequence belongs to the universal ribosomal protein uL4 family. As to quaternary structure, part of the 50S ribosomal subunit.

In terms of biological role, one of the primary rRNA binding proteins, this protein initially binds near the 5'-end of the 23S rRNA. It is important during the early stages of 50S assembly. It makes multiple contacts with different domains of the 23S rRNA in the assembled 50S subunit and ribosome. Forms part of the polypeptide exit tunnel. In Coxiella burnetii (strain RSA 331 / Henzerling II), this protein is Large ribosomal subunit protein uL4.